The chain runs to 356 residues: Tyrosine recombinase XerS (356 aa).

A Core-binding (CB) domain is found at 16–121; that stretch reads LMPWYVLEYY…ALSSLYKYLT (106 aa). One can recognise a Tyr recombinase domain in the interval 169-354; the sequence is EFLEYVDCEY…VNDEQKNALD (186 aa). Active-site residues include Arg-210, Lys-234, His-306, Arg-309, and His-332. The O-(3'-phospho-DNA)-tyrosine intermediate role is filled by Tyr-341.

This sequence belongs to the 'phage' integrase family. XerS subfamily.

It localises to the cytoplasm. FtsK is required for recombination. Site-specific tyrosine recombinase, which acts by catalyzing the cutting and rejoining of the recombining DNA molecules. Essential to convert dimers of the bacterial chromosome into monomers to permit their segregation at cell division. The sequence is that of Tyrosine recombinase XerS from Streptococcus mutans serotype c (strain ATCC 700610 / UA159).